Consider the following 256-residue polypeptide: Imidazole glycerol phosphate synthase subunit HisF (256 aa).

Catalysis depends on residues D12 and D131.

It belongs to the HisA/HisF family. In terms of assembly, heterodimer of HisH and HisF.

Its subcellular location is the cytoplasm. It carries out the reaction 5-[(5-phospho-1-deoxy-D-ribulos-1-ylimino)methylamino]-1-(5-phospho-beta-D-ribosyl)imidazole-4-carboxamide + L-glutamine = D-erythro-1-(imidazol-4-yl)glycerol 3-phosphate + 5-amino-1-(5-phospho-beta-D-ribosyl)imidazole-4-carboxamide + L-glutamate + H(+). It functions in the pathway amino-acid biosynthesis; L-histidine biosynthesis; L-histidine from 5-phospho-alpha-D-ribose 1-diphosphate: step 5/9. In terms of biological role, IGPS catalyzes the conversion of PRFAR and glutamine to IGP, AICAR and glutamate. The HisF subunit catalyzes the cyclization activity that produces IGP and AICAR from PRFAR using the ammonia provided by the HisH subunit. This is Imidazole glycerol phosphate synthase subunit HisF from Bifidobacterium longum (strain NCC 2705).